Reading from the N-terminus, the 333-residue chain is Transaldolase (333 aa).

The active-site Schiff-base intermediate with substrate is the Lys-135.

The protein belongs to the transaldolase family. Type 1 subfamily. As to quaternary structure, homodimer.

The protein localises to the cytoplasm. It carries out the reaction D-sedoheptulose 7-phosphate + D-glyceraldehyde 3-phosphate = D-erythrose 4-phosphate + beta-D-fructose 6-phosphate. It participates in carbohydrate degradation; pentose phosphate pathway; D-glyceraldehyde 3-phosphate and beta-D-fructose 6-phosphate from D-ribose 5-phosphate and D-xylulose 5-phosphate (non-oxidative stage): step 2/3. Functionally, transaldolase is important for the balance of metabolites in the pentose-phosphate pathway. This Prochlorococcus marinus (strain MIT 9301) protein is Transaldolase.